The primary structure comprises 615 residues: DNA mismatch repair protein MutL (615 aa).

The interval 363 to 397 is disordered; it reads FAEPAAREPVAPRYSPAPASGSRPAAPWPNAQPGY. Low complexity predominate over residues 364-387; sequence AEPAAREPVAPRYSPAPASGSRPA.

This sequence belongs to the DNA mismatch repair MutL/HexB family.

Its function is as follows. This protein is involved in the repair of mismatches in DNA. It is required for dam-dependent methyl-directed DNA mismatch repair. May act as a 'molecular matchmaker', a protein that promotes the formation of a stable complex between two or more DNA-binding proteins in an ATP-dependent manner without itself being part of a final effector complex. The sequence is that of DNA mismatch repair protein MutL from Shigella flexneri.